Here is a 209-residue protein sequence, read N- to C-terminus: Redox-sensing transcriptional repressor Rex (209 aa).

A DNA-binding region (H-T-H motif) is located at residues 16–55 (LYYRFIQNLSLSGKQRVSSAELSEAVKVDSATIRRDFSYF). 90–95 (GVGNLG) is a binding site for NAD(+).

The protein belongs to the transcriptional regulatory Rex family. As to quaternary structure, homodimer.

It localises to the cytoplasm. Its function is as follows. Modulates transcription in response to changes in cellular NADH/NAD(+) redox state. This chain is Redox-sensing transcriptional repressor Rex, found in Bacillus cytotoxicus (strain DSM 22905 / CIP 110041 / 391-98 / NVH 391-98).